We begin with the raw amino-acid sequence, 240 residues long: Large ribosomal subunit protein uL2 (240 aa).

A compositionally biased stretch (polar residues) spans 1 to 20 (MGKRLQSQNRGKGTPRYTSP). 2 disordered regions span residues 1–33 (MGKR…YRKF) and 204–240 (PFGG…TGKR). Basic residues-rich tracts occupy residues 21–30 (THKRKGAVKY) and 224–240 (SPGR…TGKR).

It belongs to the universal ribosomal protein uL2 family. As to quaternary structure, part of the 50S ribosomal subunit. Forms a bridge to the 30S subunit in the 70S ribosome.

Functionally, one of the primary rRNA binding proteins. Required for association of the 30S and 50S subunits to form the 70S ribosome, for tRNA binding and peptide bond formation. It has been suggested to have peptidyltransferase activity; this is somewhat controversial. Makes several contacts with the 16S rRNA in the 70S ribosome. This Methanococcus aeolicus (strain ATCC BAA-1280 / DSM 17508 / OCM 812 / Nankai-3) protein is Large ribosomal subunit protein uL2.